Here is a 37-residue protein sequence, read N- to C-terminus: Cytochrome b6-f complex subunit 5 (37 aa).

Residues 5 to 25 (LLFGIVLGLIPVTLVGLFVAA) traverse the membrane as a helical segment.

It belongs to the PetG family. As to quaternary structure, the 4 large subunits of the cytochrome b6-f complex are cytochrome b6, subunit IV (17 kDa polypeptide, PetD), cytochrome f and the Rieske protein, while the 4 small subunits are PetG, PetL, PetM and PetN. The complex functions as a dimer.

The protein localises to the plastid. Its subcellular location is the chloroplast thylakoid membrane. Functionally, component of the cytochrome b6-f complex, which mediates electron transfer between photosystem II (PSII) and photosystem I (PSI), cyclic electron flow around PSI, and state transitions. PetG is required for either the stability or assembly of the cytochrome b6-f complex. This Rhodomonas salina (Cryptomonas salina) protein is Cytochrome b6-f complex subunit 5.